We begin with the raw amino-acid sequence, 236 residues long: Phosphoribosylaminoimidazole-succinocarboxamide synthase (236 aa).

This sequence belongs to the SAICAR synthetase family.

It catalyses the reaction 5-amino-1-(5-phospho-D-ribosyl)imidazole-4-carboxylate + L-aspartate + ATP = (2S)-2-[5-amino-1-(5-phospho-beta-D-ribosyl)imidazole-4-carboxamido]succinate + ADP + phosphate + 2 H(+). It participates in purine metabolism; IMP biosynthesis via de novo pathway; 5-amino-1-(5-phospho-D-ribosyl)imidazole-4-carboxamide from 5-amino-1-(5-phospho-D-ribosyl)imidazole-4-carboxylate: step 1/2. This Chlorobium phaeobacteroides (strain BS1) protein is Phosphoribosylaminoimidazole-succinocarboxamide synthase.